We begin with the raw amino-acid sequence, 262 residues long: Granzyme A (262 aa).

The N-terminal stretch at Met-1 to Cys-26 is a signal peptide. The propeptide at Glu-27–Lys-28 is activation peptide. The 231-residue stretch at Ile-29–Lys-259 folds into the Peptidase S1 domain. A disulfide bridge links Cys-54 with Cys-70. Active-site charge relay system residues include His-69 and Asp-114. 3 disulfides stabilise this stretch: Cys-148–Cys-218, Cys-179–Cys-197, and Cys-208–Cys-234. The N-linked (GlcNAc...) asparagine glycan is linked to Asn-170. The active-site Charge relay system is Ser-212.

Belongs to the peptidase S1 family. Granzyme subfamily. As to quaternary structure, homodimer; disulfide-linked. Interacts with APEX1.

It is found in the secreted. The protein resides in the cytoplasmic granule. The enzyme catalyses Hydrolysis of proteins, including fibronectin, type IV collagen and nucleolin. Preferential cleavage: -Arg-|-Xaa-, -Lys-|-Xaa- &gt;&gt; -Phe-|-Xaa- in small molecule substrates.. Its function is as follows. Abundant protease in the cytosolic granules of cytotoxic T-cells and NK-cells which activates caspase-independent pyroptosis when delivered into the target cell through the immunological synapse. It cleaves after Lys or Arg. Once delivered into the target cell, acts by catalyzing cleavage of gasdermin-B (GSDMB), releasing the pore-forming moiety of GSDMB, thereby triggering pyroptosis and target cell death. Cleaves APEX1 after 'Lys-31' and destroys its oxidative repair activity. Cleaves the nucleosome assembly protein SET after 'Lys-189', which disrupts its nucleosome assembly activity and allows the SET complex to translocate into the nucleus to nick and degrade the DNA. This chain is Granzyme A, found in Homo sapiens (Human).